Reading from the N-terminus, the 189-residue chain is Casparian strip membrane protein 2 (189 aa).

The segment at 1-21 is disordered; that stretch reads MKVSTIESGEISKGASSPRKG. The Cytoplasmic portion of the chain corresponds to 1–25; that stretch reads MKVSTIESGEISKGASSPRKGMKRG. The chain crosses the membrane as a helical span at residues 26-46; sequence LSIMDFILRIFAAMSTLGSAL. Topologically, residues 47–73 are extracellular; the sequence is SMGTAKQTMPFATRFVRFKVSFHDLPT. Residues 74-94 form a helical membrane-spanning segment; it reads FLFFVTANSIVCGYLALSLVL. The Cytoplasmic segment spans residues 95-108; the sequence is SFFHIVRTISVKSR. Residues 109-129 form a helical membrane-spanning segment; the sequence is ILLVFLDTVMFGLLTSGASAA. The Extracellular segment spans residues 130 to 163; the sequence is AAIVYVAHYGNPSANWFPFCQQYNSFCGRISGSL. The chain crosses the membrane as a helical span at residues 164-184; sequence VGSFIAVVIFMILILMSGISI. The Cytoplasmic portion of the chain corresponds to 185–189; that stretch reads SKSKH.

It belongs to the Casparian strip membrane proteins (CASP) family. Homodimer and heterodimers.

The protein localises to the cell membrane. Its function is as follows. Regulates membrane-cell wall junctions and localized cell wall deposition. Required for establishment of the Casparian strip membrane domain (CSD) and the subsequent formation of Casparian strips, a cell wall modification of the root endodermis that determines an apoplastic barrier between the intraorganismal apoplasm and the extraorganismal apoplasm and prevents lateral diffusion. The chain is Casparian strip membrane protein 2 from Medicago truncatula (Barrel medic).